Here is a 225-residue protein sequence, read N- to C-terminus: mRNA-decapping protein D10 (225 aa).

The Nudix hydrolase domain occupies 35–218 (AKYPLSVIGI…NVIKYIINAV (184 aa)). The Nudix box motif lies at 116–137 (GKIKDLESITNCLVREIKEELN). E122 is a Mg(2+) binding site. E131 (nucleophile) is an active-site residue. Mn(2+) is bound at residue E135. D157 contributes to the Mg(2+) binding site.

It belongs to the Nudix hydrolase family. It depends on Mg(2+) as a cofactor. Mn(2+) serves as cofactor.

Functionally, decapping enzyme required for the removal of the 5'-end m7GpppN cap tethered to viral and host mRNAs to allow their decay in cells. May therefore accelerate viral and cellular mRNA turnover to eliminate competing host mRNAs and allow stage-specific synthesis of viral proteins. Acceleration of the turnover of cellular transcripts may even promote the shutoff of host protein synthesis. The sequence is that of mRNA-decapping protein D10 from Fowlpox virus (strain NVSL) (FPV).